The primary structure comprises 809 residues: WD repeat protein iqw1 (809 aa).

WD repeat units follow at residues 43 to 82 (GHTG…KPRH), 87 to 128 (GHVQ…EGGM), 141 to 180 (CALD…VCNQ), 193 to 233 (PYRI…KSFR), and 241 to 295 (SPEK…LFHV). A disordered region spans residues 599-644 (SMYTGHSDLNDDDDDYQDEESYSYASDDDDESDEDSDEGPTLLSLR). The span at 608-636 (NDDDDDYQDEESYSYASDDDDESDEDSDE) shows a compositional bias: acidic residues. 2 WD repeats span residues 668-708 (CNVE…ILAI) and 711-750 (GDSE…PSGC).

As to quaternary structure, interacts with ddb1.

It localises to the cytoplasm. In terms of biological role, ligand-dependent coactivator of nuclear receptors that may function as a substrate receptor for CUL4-DDB1 E3 ubiquitin-protein ligase complex. This is WD repeat protein iqw1 (iqw1) from Schizosaccharomyces pombe (strain 972 / ATCC 24843) (Fission yeast).